Reading from the N-terminus, the 104-residue chain is L-rhamnose mutarotase (104 aa).

Position 18 (Tyr18) interacts with substrate. His22 acts as the Proton donor in catalysis. Residues Tyr41 and Trp76–Trp77 contribute to the substrate site.

The protein belongs to the rhamnose mutarotase family. As to quaternary structure, homodimer.

It localises to the cytoplasm. The enzyme catalyses alpha-L-rhamnose = beta-L-rhamnose. It participates in carbohydrate metabolism; L-rhamnose metabolism. Functionally, involved in the anomeric conversion of L-rhamnose. The polypeptide is L-rhamnose mutarotase (Sinorhizobium fredii (strain NBRC 101917 / NGR234)).